A 145-amino-acid polypeptide reads, in one-letter code: 3-hydroxyacyl-[acyl-carrier-protein] dehydratase FabZ (145 aa).

His-49 is a catalytic residue.

Belongs to the thioester dehydratase family. FabZ subfamily.

The protein resides in the cytoplasm. The catalysed reaction is a (3R)-hydroxyacyl-[ACP] = a (2E)-enoyl-[ACP] + H2O. Functionally, involved in unsaturated fatty acids biosynthesis. Catalyzes the dehydration of short chain beta-hydroxyacyl-ACPs and long chain saturated and unsaturated beta-hydroxyacyl-ACPs. The polypeptide is 3-hydroxyacyl-[acyl-carrier-protein] dehydratase FabZ (Rickettsia akari (strain Hartford)).